We begin with the raw amino-acid sequence, 300 residues long: Cutinase est2 (300 aa).

The N-terminal stretch at Met-1–Ala-39 is a signal peptide. Tyr-99 is a binding site for poly(ethylene terephthalate). The active-site Nucleophile is the Ser-169. Residues Met-170 and Trp-194 each coordinate poly(ethylene terephthalate). Ca(2+) is bound at residue Glu-213. Catalysis depends on Asp-215, which acts as the Charge relay system. Asp-243 lines the Ca(2+) pocket. His-247 (charge relay system) is an active-site residue. A disulfide bridge links Cys-280 with Cys-298. Glu-292 provides a ligand contact to Ca(2+).

The protein belongs to the AB hydrolase superfamily. Monomer. It depends on Ca(2+) as a cofactor.

Its subcellular location is the secreted. The protein resides in the periplasm. It catalyses the reaction an acetyl ester + H2O = an aliphatic alcohol + acetate + H(+). The catalysed reaction is (ethylene terephthalate)(n) + H2O = (ethylene terephthalate)(n-1) + 4-[(2-hydroxyethoxy)carbonyl]benzoate + H(+). It carries out the reaction a butanoate ester + H2O = an aliphatic alcohol + butanoate + H(+). The enzyme catalyses cutin + H2O = cutin monomers.. It catalyses the reaction a hexanoate ester + H2O = an aliphatic alcohol + hexanoate + H(+). The catalysed reaction is an octanoate ester + H2O = an aliphatic alcohol + octanoate + H(+). Activated by calcium ions. Activated by magnesium ions. Activated by manganese ions. Inhibited by the serine hydrolase inhibitor phenylmethanesulfonyl fluoride (PMSF). Inhibited by the chelator ethylenediaminetetraacetic acid (EDTA). Inhibited by iron ions. Inhibited by aluminum ions. Inhibited by rubidium ions. Inhibited by lithium ions. Its function is as follows. Catalyzes the hydrolysis of cutin, a polyester that forms the structure of plant cuticle. Shows esterase activity towards p-nitrophenol-linked aliphatic esters (pNP-aliphatic esters). Capable of degrading the plastic poly(ethylene terephthalate) (PET), the most abundant polyester plastic in the world. Can also depolymerize the synthetic polyesters poly(epsilon-caprolactone) (PCL), poly(butylene succinate-co-adipate) (PBSA), poly(butylene succinate) (PBS), and poly(lactic acid) (PLA). The protein is Cutinase est2 of Thermobifida alba (Thermomonospora alba).